The following is a 209-amino-acid chain: Ribonuclease HII (209 aa).

The RNase H type-2 domain occupies 20-209; sequence GLVAGVDEAG…VARSLPGACR (190 aa). A divalent metal cation is bound by residues D26, E27, and D118.

The protein belongs to the RNase HII family. It depends on Mn(2+) as a cofactor. The cofactor is Mg(2+).

It is found in the cytoplasm. It carries out the reaction Endonucleolytic cleavage to 5'-phosphomonoester.. Its function is as follows. Endonuclease that specifically degrades the RNA of RNA-DNA hybrids. In Verminephrobacter eiseniae (strain EF01-2), this protein is Ribonuclease HII.